Reading from the N-terminus, the 518-residue chain is Tropomyosin-1, isoforms 33/34 (518 aa).

Residues 14 to 267 (DKDGALERAL…DDLIVEKERY (254 aa)) adopt a coiled-coil conformation. 2 disordered regions span residues 101 to 125 (RSEERLGSATAKLSEASQAADESER) and 288 to 518 (FWNP…APPA). A compositionally biased stretch (pro residues) spans 293-305 (NPKPPTPKLPTPT). Positions 318–348 (AAEAAAAAEAEAAEAAAAAGEAGPDGAPAAP) are enriched in low complexity. 2 stretches are compositionally biased toward pro residues: residues 357–374 (EPTPPKEPTPPPPPPPPF) and 394–405 (EPPPPGSEPEPV). Over residues 406–518 (PAAEGEAAPA…AAAEGEAPPA (113 aa)) the composition is skewed to low complexity.

It belongs to the tropomyosin family. In terms of assembly, homodimer. Both isoforms are only expressed in indirect flight muscles.

It is found in the cytoplasm. Its subcellular location is the cytoskeleton. Functionally, tropomyosin, in association with the troponin complex, plays a central role in the calcium dependent regulation of muscle contraction. This chain is Tropomyosin-1, isoforms 33/34 (Tm1), found in Drosophila melanogaster (Fruit fly).